The chain runs to 571 residues: MKMSKMFMPTLKEIPADAEITSHQLMVRSGMIKKMTSGVYNQLPMGLRVFKKIEQIIREELNKKDCQEILCAALLPSELWKESGRWTAMGEEMFRLKDRTEREYCLGPTHEEAFTDIIRQEITSYKQLPLNLYQIQVKYRDERRPRFGVMRTKTFTMKDAYSFDVDDKGLDKSYQDMFDAYVSIFDRCGLENSPVQADSGAIGGSTSAEFMVKSEVGEDEVVFCSGCDYAANVERAESCNLASQKEEMKELEEVHTPGAATIKELEEFLKTSPDKFAKTLVYEADGKTVVVVVRGDREVNEIKVSNAIGSVIEFALATDDVVRKVTNAEVGFAGPIGINADYVFIDKEIVEQRNIVVGANKTEYHIKNANYGRDFEGIVGDFRNVQEGDKCIVCGKPLEIARGVEVGHIFKLGTKYSESMNANFIDKDGKSKPIVMGCYGIGVERTAAAIIEQHNDEKGIIWPLSVAPYHVVIVPANMKNEEQISIAENIYNDLQAMGVEVLLDDRDERIGVKFNDSELIGIPMRITVGKNINEGKVEFKLRHKEDKEIIDIEEINEKVKAEFIRNNVRLG.

The protein belongs to the class-II aminoacyl-tRNA synthetase family. ProS type 1 subfamily. In terms of assembly, homodimer.

Its subcellular location is the cytoplasm. It carries out the reaction tRNA(Pro) + L-proline + ATP = L-prolyl-tRNA(Pro) + AMP + diphosphate. Functionally, catalyzes the attachment of proline to tRNA(Pro) in a two-step reaction: proline is first activated by ATP to form Pro-AMP and then transferred to the acceptor end of tRNA(Pro). As ProRS can inadvertently accommodate and process non-cognate amino acids such as alanine and cysteine, to avoid such errors it has two additional distinct editing activities against alanine. One activity is designated as 'pretransfer' editing and involves the tRNA(Pro)-independent hydrolysis of activated Ala-AMP. The other activity is designated 'posttransfer' editing and involves deacylation of mischarged Ala-tRNA(Pro). The misacylated Cys-tRNA(Pro) is not edited by ProRS. The sequence is that of Proline--tRNA ligase 1 from Clostridioides difficile (strain 630) (Peptoclostridium difficile).